Here is a 302-residue protein sequence, read N- to C-terminus: Pyridoxal 5'-phosphate synthase subunit PdxS (302 aa).

Aspartate 32 provides a ligand contact to D-ribose 5-phosphate. The Schiff-base intermediate with D-ribose 5-phosphate role is filled by lysine 89. Residue glycine 161 coordinates D-ribose 5-phosphate. Arginine 173 lines the D-glyceraldehyde 3-phosphate pocket. Residues glycine 222 and 243–244 (GS) contribute to the D-ribose 5-phosphate site. Residues 275–302 (IAKNPGKGMKGQANADLDEEEQLQGRGV) are disordered.

Belongs to the PdxS/SNZ family. As to quaternary structure, in the presence of PdxT, forms a dodecamer of heterodimers.

It carries out the reaction aldehydo-D-ribose 5-phosphate + D-glyceraldehyde 3-phosphate + L-glutamine = pyridoxal 5'-phosphate + L-glutamate + phosphate + 3 H2O + H(+). It functions in the pathway cofactor biosynthesis; pyridoxal 5'-phosphate biosynthesis. Functionally, catalyzes the formation of pyridoxal 5'-phosphate from ribose 5-phosphate (RBP), glyceraldehyde 3-phosphate (G3P) and ammonia. The ammonia is provided by the PdxT subunit. Can also use ribulose 5-phosphate and dihydroxyacetone phosphate as substrates, resulting from enzyme-catalyzed isomerization of RBP and G3P, respectively. The sequence is that of Pyridoxal 5'-phosphate synthase subunit PdxS from Haloarcula marismortui (strain ATCC 43049 / DSM 3752 / JCM 8966 / VKM B-1809) (Halobacterium marismortui).